The chain runs to 195 residues: Protease (195 aa).

Residues 71–149 enclose the Peptidase A2 domain; sequence ALMLVDTGAE…DKWQILGRDV (79 aa). Asp76 is an active-site residue.

The protein is Protease of Bos taurus (Bovine).